Here is a 682-residue protein sequence, read N- to C-terminus: PWWP domain-containing DNA repair factor 3A (682 aa).

Ser-105 bears the Phosphoserine mark. The segment at 121 to 145 (EKTDADVASQVSSAPSPSLLGEDGQ) is disordered. Positions 127 to 140 (VASQVSSAPSPSLL) are enriched in low complexity. Phosphoserine is present on Ser-168. Disordered stretches follow at residues 179–318 (GPKT…GAAP) and 334–369 (GAGDKPEEDPVSSEESTGFKSTHSLLEEEEEEEEEP). A compositionally biased stretch (basic and acidic residues) spans 203-220 (HGQESTTKKRQRNLGEKP). Phosphoserine is present on residues Ser-345 and Ser-346. Polar residues predominate over residues 346–357 (SEESTGFKSTHS). The PWWP domain maps to 383-444 (VGMLVWLKYQ…KHFDCKEKHA (62 aa)).

This sequence belongs to the PWWP3A family. As to quaternary structure, interacts with TP53BP1 (via BRCT domain); the interaction is not dependent on its phosphorylation status. Binds nucleosomes. Interacts with trimethylated 'Lys-36' of histone H3 (H3K36me3) (in vitro).

The protein localises to the nucleus. Its function is as follows. Involved in the DNA damage response pathway by contributing to the maintenance of chromatin architecture. Recruited to the vicinity of DNA breaks by TP53BP1 and plays an accessory role to facilitate damage-induced chromatin changes and promoting chromatin relaxation. Required for efficient DNA repair and cell survival following DNA damage. The chain is PWWP domain-containing DNA repair factor 3A (Pwwp3a) from Mus musculus (Mouse).